The primary structure comprises 261 residues: Triosephosphate isomerase (261 aa).

Asn10–Lys12 contacts substrate. His100 (electrophile) is an active-site residue. Catalysis depends on Glu172, which acts as the Proton acceptor. Residues Gly178, Ser218, and Gly239–Gly240 each bind substrate.

Belongs to the triosephosphate isomerase family. As to quaternary structure, homodimer.

The protein localises to the cytoplasm. It catalyses the reaction D-glyceraldehyde 3-phosphate = dihydroxyacetone phosphate. It functions in the pathway carbohydrate biosynthesis; gluconeogenesis. Its pathway is carbohydrate degradation; glycolysis; D-glyceraldehyde 3-phosphate from glycerone phosphate: step 1/1. Functionally, involved in the gluconeogenesis. Catalyzes stereospecifically the conversion of dihydroxyacetone phosphate (DHAP) to D-glyceraldehyde-3-phosphate (G3P). The polypeptide is Triosephosphate isomerase (Mycobacterium marinum (strain ATCC BAA-535 / M)).